Reading from the N-terminus, the 190-residue chain is T-cell receptor gamma chain C region 5/10-13 (190 aa).

The c region stretch occupies residues 1 to 157; sequence DKRTDSDFSP…LQVTTTYAFY (157 aa). A helical membrane pass occupies residues 158–178; the sequence is TYLILFFKSMVHLAFVVFCLF. The Cytoplasmic portion of the chain corresponds to 179-190; sequence RRAAMSCDDQRS.

The protein resides in the membrane. The chain is T-cell receptor gamma chain C region 5/10-13 from Mus musculus (Mouse).